Here is a 460-residue protein sequence, read N- to C-terminus: Notoamide biosynthesis cluster transcriptional coactivator notR (460 aa).

One can recognise an HTH iclR-type domain in the interval 74–145 (LQDLARQVEI…EPMPNYVSHT (72 aa)). A DNA-binding region (H-T-H motif) is located at residues 107–126 (IQDLADLAGVPDIQLRRVIR). The tract at residues 300–320 (TRDFTPQPESSPRPGSASSRV) is disordered.

The protein resides in the nucleus. Functionally, transcription factor that probably regulates the expression of the gene cluster that mediates the biosynthesis of notoamide, a fungal indole alkaloid that belongs to a family of natural products containing a characteristic bicyclo[2.2.2]diazaoctane core. This is Notoamide biosynthesis cluster transcriptional coactivator notR from Aspergillus sp. (strain MF297-2).